We begin with the raw amino-acid sequence, 516 residues long: Maturase K (516 aa).

The protein belongs to the intron maturase 2 family. MatK subfamily.

The protein resides in the plastid. Its subcellular location is the chloroplast. Functionally, usually encoded in the trnK tRNA gene intron. Probably assists in splicing its own and other chloroplast group II introns. The chain is Maturase K from Galanthus nivalis (Common snowdrop).